Consider the following 633-residue polypeptide: MGQASSHAAGAEGSATKPLSMLVAAVGVVYGDIGTSPLYTLKEVFSGAYGVPVNHDGVLGILSLIFWSLIWVVSIKYMMFVLRADNQGEGGIMALTALARRAAAGRKRLRTLLVVCGLIGAALFYGDSMITPAISVLSAIEGLGLAFDGIDHWVVPLSLVVLVGLFLIQKHGTARIGILFGPIMVTWFLVLGALGVYGISHYPEVLHAMNPVWAVRFFMVHTGMGVAILGAVVLALTGAEALYADMGHFGRKPIARAWFLLVLPALVLNYFGQGALLLENPDAARNPFYLLAPSWALIPLVGLSTLATVIASQAVISGAFSLTRQAIQLGYIPRMYIQHTSSDEQGQIYIGAVNWSLMVGVVLLVIGFESSGALASAYGVAVTGTMLMTTILVSAVMLLLWKWPPILAVPVLIGFLLVDGLYFAANVPKIVQGGAFPVIAGIALFVLMTTWKRGKQLLVERLDEGALPLPIFISSIRVQPPHRVQGTAVFLTARSDAVPHALLHNLLHNQVLHEQVVLLTVVYEDIPRVPPSRRFEVEAHGEGFFRVILHFGFTDEPDVPQALKLCHLDDLDFSPMRTTYFLSRETVIASKLEGMARWREALFAFMLKNANGNLRFFNLPLNRVIELGTQVEM.

A run of 12 helical transmembrane segments spans residues 21-41, 61-81, 112-132, 149-169, 176-196, 217-237, 258-278, 290-310, 348-368, 377-397, 398-418, and 430-450; these read MLVAAVGVVYGDIGTSPLYTL, ILSLIFWSLIWVVSIKYMMFV, LLVVCGLIGAALFYGDSMITP, GIDHWVVPLSLVVLVGLFLIQ, IGILFGPIMVTWFLVLGALGV, FFMVHTGMGVAILGAVVLALT, WFLLVLPALVLNYFGQGALLL, LLAPSWALIPLVGLSTLATVI, IYIGAVNWSLMVGVVLLVIGF, AYGVAVTGTMLMTTILVSAVM, LLLWKWPPILAVPVLIGFLLV, and IVQGGAFPVIAGIALFVLMTT.

Belongs to the HAK/KUP transporter (TC 2.A.72) family.

It localises to the cell inner membrane. The enzyme catalyses K(+)(in) + H(+)(in) = K(+)(out) + H(+)(out). Transport of potassium into the cell. Likely operates as a K(+):H(+) symporter. This chain is Probable potassium transport system protein Kup, found in Pseudomonas fluorescens (strain Pf0-1).